Reading from the N-terminus, the 2278-residue chain is Protein Ycf2 (2278 aa).

1632–1639 (GSIGTGRS) provides a ligand contact to ATP.

Belongs to the Ycf2 family.

Its subcellular location is the plastid. It localises to the chloroplast stroma. Probable ATPase of unknown function. Its presence in a non-photosynthetic plant (Epifagus virginiana) and experiments in tobacco indicate that it has an essential function which is probably not related to photosynthesis. The sequence is that of Protein Ycf2 from Solanum bulbocastanum (Wild potato).